Here is a 258-residue protein sequence, read N- to C-terminus: Snake venom serine protease KN12 (258 aa).

An N-terminal signal peptide occupies residues 1-18 (MVLIRVLANLLILQLSYA). A propeptide spanning residues 19-24 (QRSSEL) is cleaved from the precursor. The region spanning 25–249 (VIGGDECNIN…HLDWIQNIIA (225 aa)) is the Peptidase S1 domain. 6 cysteine pairs are disulfide-bonded: Cys-31–Cys-163, Cys-50–Cys-66, Cys-98–Cys-256, Cys-142–Cys-210, Cys-174–Cys-189, and Cys-200–Cys-225. The active-site Charge relay system is His-65. A glycan (N-linked (GlcNAc...) asparagine) is linked at Asn-103. The active-site Charge relay system is the Asp-110. N-linked (GlcNAc...) asparagine glycosylation is found at Asn-121, Asn-122, Asn-154, and Asn-170. Catalysis depends on Ser-204, which acts as the Charge relay system. Residue Asn-251 is glycosylated (N-linked (GlcNAc...) asparagine).

Belongs to the peptidase S1 family. Snake venom subfamily. In terms of assembly, monomer. In terms of tissue distribution, expressed by the venom gland.

Its subcellular location is the secreted. Functionally, snake venom serine protease that may act in the hemostasis system of the prey. The chain is Snake venom serine protease KN12 from Trimeresurus stejnegeri (Chinese green tree viper).